Here is an 84-residue protein sequence, read N- to C-terminus: Putative glutaredoxin MT3292 (84 aa).

A Glutaredoxin domain is found at 1-84 (MITAALTIYT…VKAKLVKIAG (84 aa)).

This is Putative glutaredoxin MT3292 from Mycobacterium tuberculosis (strain CDC 1551 / Oshkosh).